Here is a 165-residue protein sequence, read N- to C-terminus: 2-C-methyl-D-erythritol 2,4-cyclodiphosphate synthase (165 aa).

2 residues coordinate a divalent metal cation: aspartate 9 and histidine 11. 4-CDP-2-C-methyl-D-erythritol 2-phosphate contacts are provided by residues 9 to 11 (DVH) and 35 to 36 (HS). Histidine 43 lines the a divalent metal cation pocket. 4-CDP-2-C-methyl-D-erythritol 2-phosphate is bound by residues 57–59 (DIG), 101–107 (AQAPKML), 133–136 (TTTE), phenylalanine 140, and arginine 143.

The protein belongs to the IspF family. Homotrimer. Requires a divalent metal cation as cofactor.

It carries out the reaction 4-CDP-2-C-methyl-D-erythritol 2-phosphate = 2-C-methyl-D-erythritol 2,4-cyclic diphosphate + CMP. Its pathway is isoprenoid biosynthesis; isopentenyl diphosphate biosynthesis via DXP pathway; isopentenyl diphosphate from 1-deoxy-D-xylulose 5-phosphate: step 4/6. Its function is as follows. Involved in the biosynthesis of isopentenyl diphosphate (IPP) and dimethylallyl diphosphate (DMAPP), two major building blocks of isoprenoid compounds. Catalyzes the conversion of 4-diphosphocytidyl-2-C-methyl-D-erythritol 2-phosphate (CDP-ME2P) to 2-C-methyl-D-erythritol 2,4-cyclodiphosphate (ME-CPP) with a corresponding release of cytidine 5-monophosphate (CMP). The chain is 2-C-methyl-D-erythritol 2,4-cyclodiphosphate synthase from Pseudoalteromonas translucida (strain TAC 125).